We begin with the raw amino-acid sequence, 66 residues long: Large ribosomal subunit protein bL35 (66 aa).

This sequence belongs to the bacterial ribosomal protein bL35 family.

The sequence is that of Large ribosomal subunit protein bL35 from Thermomicrobium roseum (strain ATCC 27502 / DSM 5159 / P-2).